The chain runs to 352 residues: C-C chemokine receptor type 5 (352 aa).

The Extracellular segment spans residues 1-30 (MDYQVSSPTYDIDYYTSEPCQKINVKQIAA). Residue Tyr-3 is modified to Sulfotyrosine. O-linked (GalNAc...) serine glycosylation is found at Ser-6 and Ser-7. 3 positions are modified to sulfotyrosine: Tyr-10, Tyr-14, and Tyr-15. Disulfide bonds link Cys-20–Cys-269 and Cys-101–Cys-178. Residues 31–58 (RLLPPLYSLVFIFGFVGNILVVLILINC) form a helical membrane-spanning segment. At 59–68 (KRLKSMTDIY) the chain is on the cytoplasmic side. A helical membrane pass occupies residues 69 to 89 (LLNLAISDLLFLLTVPFWAHY). The Extracellular portion of the chain corresponds to 90 to 102 (AAAQWDFGNTMCQ). The helical transmembrane segment at 103 to 124 (LLTGLYFIGFFSGIFFIILLTI) threads the bilayer. Residues 125–141 (DRYLAIVHAVFALKART) are Cytoplasmic-facing. A helical membrane pass occupies residues 142 to 166 (VTFGVVTSVITWVVAVFASLPGIIF). Residues 167-198 (TRSQREGLHYTCSSHFPYSQYQFWKNFQTLKI) are Extracellular-facing. Residues 199–218 (VILGLVLPLLVMVICYSGIL) traverse the membrane as a helical segment. The Cytoplasmic portion of the chain corresponds to 219 to 235 (KTLLRCRNEKKRHRAVR). A helical membrane pass occupies residues 236-260 (LIFTIMIVYFLFWAPYNIVLLLNTF). Residues 261–277 (QEFFGLNNCSSSNRLDQ) lie on the Extracellular side of the membrane. Residues 278-301 (AMQVTETLGMTHCCINPIIYAFVG) form a helical membrane-spanning segment. The Cytoplasmic segment spans residues 302–352 (EKFRNYLLVFFQKHIAKRFCKCCSIFQQEAPERASSVYTRSTGEQEISVGL). Residues Cys-321, Cys-323, and Cys-324 are each lipidated (S-palmitoyl cysteine). 4 positions are modified to phosphoserine; by BARK1: Ser-336, Ser-337, Ser-342, and Ser-349.

It belongs to the G-protein coupled receptor 1 family. As to quaternary structure, interacts with PRAF2. Efficient ligand binding to CCL3/MIP-1alpha and CCL4/MIP-1beta requires sulfation, O-glycosylation and sialic acid modifications. Glycosylation on Ser-6 is required for efficient binding of CCL4. Interacts with GRK2. Interacts with ARRB1 and ARRB2. Interacts with CNIH4. Interacts with S100A4; this interaction stimulates T-lymphocyte chemotaxis. In terms of processing, sulfated on at least 2 of the N-terminal tyrosines. Sulfation is required for efficient binding of the chemokines, CCL3 and CCL4. Post-translationally, palmitoylation in the C-terminal is important for cell surface expression. Phosphorylation on serine residues in the C-terminal is stimulated by binding CC chemokines especially by APO-RANTES. In terms of processing, O-glycosylated, but not N-glycosylated. Ser-6 appears to be the major site even if Ser-7 may be also O-glycosylated. Also sialylated glycans present which contribute to chemokine binding. Thr-16 and Ser-17 may also be glycosylated and, if so, with small moieties such as a T-antigen.

The protein localises to the cell membrane. Functionally, receptor for a number of inflammatory CC-chemokines including CCL3/MIP-1-alpha, CCL4/MIP-1-beta and RANTES and subsequently transduces a signal by increasing the intracellular calcium ion level. May play a role in the control of granulocytic lineage proliferation or differentiation. Participates in T-lymphocyte migration to the infection site by acting as a chemotactic receptor. This chain is C-C chemokine receptor type 5 (CCR5), found in Papio anubis (Olive baboon).